The chain runs to 185 residues: Elongation factor P (185 aa).

The protein belongs to the elongation factor P family.

It localises to the cytoplasm. It functions in the pathway protein biosynthesis; polypeptide chain elongation. Its function is as follows. Involved in peptide bond synthesis. Stimulates efficient translation and peptide-bond synthesis on native or reconstituted 70S ribosomes in vitro. Probably functions indirectly by altering the affinity of the ribosome for aminoacyl-tRNA, thus increasing their reactivity as acceptors for peptidyl transferase. The protein is Elongation factor P of Nitrosomonas eutropha (strain DSM 101675 / C91 / Nm57).